Consider the following 222-residue polypeptide: Glutathione transferase GST 23 (222 aa).

The GST N-terminal domain occupies 4-83 (KGVKVLGMWA…YIDEVWKGGY (80 aa)). Glutathione is bound by residues Ser-14, Lys-41, Val-55, and 67–68 (ES). One can recognise a GST C-terminal domain in the interval 89 to 220 (DPYERAQARF…ANKARREQLL (132 aa)).

It belongs to the GST superfamily.

It catalyses the reaction RX + glutathione = an S-substituted glutathione + a halide anion + H(+). Its function is as follows. Involved in multiple disease resistance (MDR). The sequence is that of Glutathione transferase GST 23 from Zea mays (Maize).